Reading from the N-terminus, the 229-residue chain is Small ribosomal subunit protein uS3 (229 aa).

The KH type-2 domain occupies 39–107; it reads IRKFLKKELY…EVFINIKEEK (69 aa).

Belongs to the universal ribosomal protein uS3 family. As to quaternary structure, part of the 30S ribosomal subunit. Forms a tight complex with proteins S10 and S14.

In terms of biological role, binds the lower part of the 30S subunit head. Binds mRNA in the 70S ribosome, positioning it for translation. This chain is Small ribosomal subunit protein uS3, found in Nitratiruptor sp. (strain SB155-2).